A 272-amino-acid polypeptide reads, in one-letter code: MSHYLIGDIHGCYSEFKSMLDLINFNLKNDIIWIAGDFIGRGPDSLKVLRLIYKLKRNIFVVLGNHEINLLLLYAKIKKIKEEDKLTEILNAPDLKILISWLRKQPLLKIDKQKKIIMIHAGIIPKWDMSDLITNSKKVECELKSKNYKKFLKFMYIKNNEHKNIWKNNLPEIIKMRLTLNIITRIRYCISETEIDLLHKEHPEKSPNHLIPWFKFKNNITKNYSIVFGHWSSIKDYKTPKNIYGLDTGCCWKGELTALKWDNKLFFKIKSK.

This sequence belongs to the Ap4A hydrolase family.

The enzyme catalyses P(1),P(4)-bis(5'-adenosyl) tetraphosphate + H2O = 2 ADP + 2 H(+). Functionally, hydrolyzes diadenosine 5',5'''-P1,P4-tetraphosphate to yield ADP. The chain is Bis(5'-nucleosyl)-tetraphosphatase, symmetrical from Wigglesworthia glossinidia brevipalpis.